The primary structure comprises 95 residues: Aspartyl/glutamyl-tRNA(Asn/Gln) amidotransferase subunit C (95 aa).

This sequence belongs to the GatC family. As to quaternary structure, heterotrimer of A, B and C subunits.

It carries out the reaction L-glutamyl-tRNA(Gln) + L-glutamine + ATP + H2O = L-glutaminyl-tRNA(Gln) + L-glutamate + ADP + phosphate + H(+). It catalyses the reaction L-aspartyl-tRNA(Asn) + L-glutamine + ATP + H2O = L-asparaginyl-tRNA(Asn) + L-glutamate + ADP + phosphate + 2 H(+). Functionally, allows the formation of correctly charged Asn-tRNA(Asn) or Gln-tRNA(Gln) through the transamidation of misacylated Asp-tRNA(Asn) or Glu-tRNA(Gln) in organisms which lack either or both of asparaginyl-tRNA or glutaminyl-tRNA synthetases. The reaction takes place in the presence of glutamine and ATP through an activated phospho-Asp-tRNA(Asn) or phospho-Glu-tRNA(Gln). The sequence is that of Aspartyl/glutamyl-tRNA(Asn/Gln) amidotransferase subunit C from Nitratidesulfovibrio vulgaris (strain DSM 19637 / Miyazaki F) (Desulfovibrio vulgaris).